The following is a 683-amino-acid chain: Translation factor guf1, mitochondrial (683 aa).

The N-terminal 43 residues, 1-43 (MRGCLQLARWLSAAPKGTAASLTRAPFVLANAPRYFTSSASRA), are a transit peptide targeting the mitochondrion. Residues 66–250 (ERYRNFCIVA…KIPAYGHFPV (185 aa)) enclose the tr-type G domain. GTP is bound by residues 75 to 82 (AHVDHGKS), 139 to 143 (DTPGH), and 193 to 196 (NKVD).

The protein belongs to the TRAFAC class translation factor GTPase superfamily. Classic translation factor GTPase family. LepA subfamily.

The protein localises to the mitochondrion inner membrane. The enzyme catalyses GTP + H2O = GDP + phosphate + H(+). Its function is as follows. Promotes mitochondrial protein synthesis. May act as a fidelity factor of the translation reaction, by catalyzing a one-codon backward translocation of tRNAs on improperly translocated ribosomes. Binds to mitochondrial ribosomes in a GTP-dependent manner. This is Translation factor guf1, mitochondrial (guf1) from Aspergillus fumigatus (strain ATCC MYA-4609 / CBS 101355 / FGSC A1100 / Af293) (Neosartorya fumigata).